A 258-amino-acid polypeptide reads, in one-letter code: Putative gamma-secretase subunit APH-1C (258 aa).

Helical transmembrane passes span 5-25 (VFFG…LFTI), 32-52 (VIFL…SSMF), 71-91 (LLIF…LAYY), 116-136 (LLAY…SFVN), 161-181 (AFMT…FFDG), 187-207 (WYTL…TFLS), and 214-234 (LVTA…VAGG).

The protein belongs to the APH-1 family. In terms of assembly, potential component of the gamma-secretase complex.

Its subcellular location is the membrane. Its function is as follows. Potential subunit of the gamma-secretase complex, an endoprotease complex that catalyzes the intramembrane cleavage of integral proteins such as Notch receptors and APP (amyloid-beta precursor protein). In Mus musculus (Mouse), this protein is Putative gamma-secretase subunit APH-1C (Aph1c).